Here is a 368-residue protein sequence, read N- to C-terminus: Phospho-N-acetylmuramoyl-pentapeptide-transferase (368 aa).

Transmembrane regions (helical) follow at residues 30–50 (AAAI…IRFL), 72–92 (VPTM…LLWA), 98–118 (HVWL…IDDY), 139–159 (VALG…SVLL), 170–190 (FSVD…TAVS), 201–221 (GLAA…AYLG), 238–258 (AGEI…FLWF), 262–284 (PAEV…VIAL), and 345–365 (KIVI…LMTL).

The protein belongs to the glycosyltransferase 4 family. MraY subfamily. Requires Mg(2+) as cofactor.

It is found in the cell inner membrane. The catalysed reaction is UDP-N-acetyl-alpha-D-muramoyl-L-alanyl-gamma-D-glutamyl-meso-2,6-diaminopimeloyl-D-alanyl-D-alanine + di-trans,octa-cis-undecaprenyl phosphate = di-trans,octa-cis-undecaprenyl diphospho-N-acetyl-alpha-D-muramoyl-L-alanyl-D-glutamyl-meso-2,6-diaminopimeloyl-D-alanyl-D-alanine + UMP. The protein operates within cell wall biogenesis; peptidoglycan biosynthesis. Its function is as follows. Catalyzes the initial step of the lipid cycle reactions in the biosynthesis of the cell wall peptidoglycan: transfers peptidoglycan precursor phospho-MurNAc-pentapeptide from UDP-MurNAc-pentapeptide onto the lipid carrier undecaprenyl phosphate, yielding undecaprenyl-pyrophosphoryl-MurNAc-pentapeptide, known as lipid I. This is Phospho-N-acetylmuramoyl-pentapeptide-transferase from Chlorobaculum parvum (strain DSM 263 / NCIMB 8327) (Chlorobium vibrioforme subsp. thiosulfatophilum).